Reading from the N-terminus, the 359-residue chain is MRAAPMSLTILGIESSCDDTAAAILRGPGDDVAILSSVVSSQTDLHAAFGGVVPEIAARAHAETLDLVVEEAMATAGIALSDVDAIAVTAGPGLIGGVLSGVMAAKGLALGLGKPLIGVNHLAGHALTPRLTDGLAFPYLLLLVSGGHCQFLRVEGPERFVRLGGTIDDAPGEAFDKVARLLGLPQPGGPSVERAALAGDATRFKLPRPLLDRPGCDLSFSGLKTAVLRLRDGLVEANGGLTEQDRADICASFQAVVASVLAEKSRRALALGDVTAFAVAGGVAANQVLRAALEEVTDLPFAAPPLALCTDNAAIIAYAGLLAFEGGRVDDMTLSARPRWPLDATAAPMIGSGKKGAKA.

Fe cation is bound by residues His-121 and His-125. Residues 143–147 (LVSGG), Asp-176, Gly-189, and Asn-286 contribute to the substrate site. A Fe cation-binding site is contributed by Asp-311.

Belongs to the KAE1 / TsaD family. The cofactor is Fe(2+).

It localises to the cytoplasm. The catalysed reaction is L-threonylcarbamoyladenylate + adenosine(37) in tRNA = N(6)-L-threonylcarbamoyladenosine(37) in tRNA + AMP + H(+). Its function is as follows. Required for the formation of a threonylcarbamoyl group on adenosine at position 37 (t(6)A37) in tRNAs that read codons beginning with adenine. Is involved in the transfer of the threonylcarbamoyl moiety of threonylcarbamoyl-AMP (TC-AMP) to the N6 group of A37, together with TsaE and TsaB. TsaD likely plays a direct catalytic role in this reaction. This chain is tRNA N6-adenosine threonylcarbamoyltransferase, found in Jannaschia sp. (strain CCS1).